A 196-amino-acid polypeptide reads, in one-letter code: Pyridoxal 5'-phosphate synthase subunit PdxT (196 aa).

Position 47-49 (47-49 (GES)) interacts with L-glutamine. Catalysis depends on C79, which acts as the Nucleophile. L-glutamine contacts are provided by residues R106 and 134-135 (IR). Active-site charge relay system residues include H170 and E172.

Belongs to the glutaminase PdxT/SNO family. As to quaternary structure, in the presence of PdxS, forms a dodecamer of heterodimers. Only shows activity in the heterodimer.

It carries out the reaction aldehydo-D-ribose 5-phosphate + D-glyceraldehyde 3-phosphate + L-glutamine = pyridoxal 5'-phosphate + L-glutamate + phosphate + 3 H2O + H(+). The catalysed reaction is L-glutamine + H2O = L-glutamate + NH4(+). It functions in the pathway cofactor biosynthesis; pyridoxal 5'-phosphate biosynthesis. Its function is as follows. Catalyzes the hydrolysis of glutamine to glutamate and ammonia as part of the biosynthesis of pyridoxal 5'-phosphate. The resulting ammonia molecule is channeled to the active site of PdxS. The chain is Pyridoxal 5'-phosphate synthase subunit PdxT from Bacillus mycoides (strain KBAB4) (Bacillus weihenstephanensis).